A 237-amino-acid polypeptide reads, in one-letter code: Undecaprenyl-diphosphatase (237 aa).

Helical transmembrane passes span 38–58, 65–85, 92–112, 126–146, 166–186, 191–211, and 217–237; these read QTAV…FDGI, WRII…GVLF, LFSS…ILMF, MSFL…FPGI, ALQY…ILGL, VTIL…YVLS, and GKIW…YLVG.

It belongs to the UppP family.

The protein localises to the cell inner membrane. It catalyses the reaction di-trans,octa-cis-undecaprenyl diphosphate + H2O = di-trans,octa-cis-undecaprenyl phosphate + phosphate + H(+). Functionally, catalyzes the dephosphorylation of undecaprenyl diphosphate (UPP). Confers resistance to bacitracin. The polypeptide is Undecaprenyl-diphosphatase (Thermotoga sp. (strain RQ2)).